The sequence spans 798 residues: Glycogen phosphorylase (798 aa).

An N6-(pyridoxal phosphate)lysine modification is found at Lys646.

It belongs to the glycogen phosphorylase family. The cofactor is pyridoxal 5'-phosphate.

It catalyses the reaction [(1-&gt;4)-alpha-D-glucosyl](n) + phosphate = [(1-&gt;4)-alpha-D-glucosyl](n-1) + alpha-D-glucose 1-phosphate. Its function is as follows. Phosphorylase is an important allosteric enzyme in carbohydrate metabolism. Enzymes from different sources differ in their regulatory mechanisms and in their natural substrates. However, all known phosphorylases share catalytic and structural properties. The sequence is that of Glycogen phosphorylase (glgP) from Bacillus subtilis (strain 168).